Consider the following 378-residue polypeptide: Geraniol dehydrogenase (378 aa).

Residues C48, H75, C105, C108, C111, C119, and C179 each contribute to the Zn(2+) site.

The protein belongs to the zinc-containing alcohol dehydrogenase family. Monomer. The cofactor is Zn(2+).

The enzyme catalyses (2E)-geraniol + NAD(+) = (2E)-geranial + NADH + H(+). It carries out the reaction (2E,6E)-farnesol + NAD(+) = (2E,6E)-farnesal + NADH + H(+). Functionally, catalyzes the NAD(+)-dependent oxidation of geraniol to geranial, playing an important role in the biosynthesis of neral, an alarm pheromone. Cannot use NADP(+). Also acts as a farnesol dehydrogenase by catalyzing the oxidation of (2E,6E)-farnesol to (2E,6E)-farnesal, with lower activity compared to geraniol dehydrogenase activity. The chain is Geraniol dehydrogenase from Carpoglyphus lactis (Dried fruit mite).